The primary structure comprises 169 residues: UPF0303 protein BCAN_A1444 (169 aa).

The protein belongs to the UPF0303 family.

The protein is UPF0303 protein BCAN_A1444 of Brucella canis (strain ATCC 23365 / NCTC 10854 / RM-666).